The sequence spans 187 residues: Threonylcarbamoyl-AMP synthase (187 aa).

Positions 3–187 (QVLPADAAEL…ARSGTVIREG (185 aa)) constitute a YrdC-like domain.

This sequence belongs to the SUA5 family. TsaC subfamily.

The protein resides in the cytoplasm. The catalysed reaction is L-threonine + hydrogencarbonate + ATP = L-threonylcarbamoyladenylate + diphosphate + H2O. Its function is as follows. Required for the formation of a threonylcarbamoyl group on adenosine at position 37 (t(6)A37) in tRNAs that read codons beginning with adenine. Catalyzes the conversion of L-threonine, HCO(3)(-)/CO(2) and ATP to give threonylcarbamoyl-AMP (TC-AMP) as the acyladenylate intermediate, with the release of diphosphate. The polypeptide is Threonylcarbamoyl-AMP synthase (Shewanella pealeana (strain ATCC 700345 / ANG-SQ1)).